A 75-amino-acid chain; its full sequence is Guanine nucleotide-binding protein G(I)/G(S)/G(O) subunit gamma-3 (75 aa).

Position 5 is a phosphothreonine (Thr5). A Phosphoserine modification is found at Ser9. Thr10 is subject to Phosphothreonine. Ser12 is subject to Phosphoserine. At Cys72 the chain carries Cysteine methyl ester. A lipid anchor (S-geranylgeranyl cysteine) is attached at Cys72. Residues 73-75 (ALL) constitute a propeptide, removed in mature form.

The protein belongs to the G protein gamma family. In terms of assembly, g proteins are composed of 3 units, alpha, beta and gamma. Forms a complex with GNAO1 and GNB1. Interacts with SCN8A. Abundantly expressed in brain. Low levels in testis.

It localises to the cell membrane. Functionally, guanine nucleotide-binding proteins (G proteins) are involved as a modulator or transducer in various transmembrane signaling systems. The beta and gamma chains are required for the GTPase activity, for replacement of GDP by GTP, and for G protein-effector interaction. The chain is Guanine nucleotide-binding protein G(I)/G(S)/G(O) subunit gamma-3 (GNG3) from Bos taurus (Bovine).